The following is a 205-amino-acid chain: N-(5'-phosphoribosyl)anthranilate isomerase (205 aa).

The protein belongs to the TrpF family.

The enzyme catalyses N-(5-phospho-beta-D-ribosyl)anthranilate = 1-(2-carboxyphenylamino)-1-deoxy-D-ribulose 5-phosphate. It participates in amino-acid biosynthesis; L-tryptophan biosynthesis; L-tryptophan from chorismate: step 3/5. This is N-(5'-phosphoribosyl)anthranilate isomerase from Acidiphilium cryptum (strain JF-5).